The following is a 187-amino-acid chain: MLNRNQKYDLHTIILNSKSLRKHHIKEEDVIHLKGDVKEHFYELKIVKEAHNMAFKKCTVEEGLQLRDLFNGEGNIFTTSFHINEDKSELSQLFIDNCIEKGVSAVPHLVYNGASSLLTIDVNGEEYEISRKRLNGLSNYIKSVYSTGDLLEPQDHIFGKIHPSRTFQRTLKKYYMFMKRISELLDN.

This is an uncharacterized protein from Dictyostelium discoideum (Social amoeba).